The sequence spans 282 residues: tRNA uridine(34) hydroxylase (282 aa).

The Rhodanese domain maps to Glu-128–Tyr-222. The Cysteine persulfide intermediate role is filled by Cys-182.

It belongs to the TrhO family.

It catalyses the reaction uridine(34) in tRNA + AH2 + O2 = 5-hydroxyuridine(34) in tRNA + A + H2O. Its function is as follows. Catalyzes oxygen-dependent 5-hydroxyuridine (ho5U) modification at position 34 in tRNAs. This chain is tRNA uridine(34) hydroxylase, found in Cupriavidus taiwanensis (strain DSM 17343 / BCRC 17206 / CCUG 44338 / CIP 107171 / LMG 19424 / R1) (Ralstonia taiwanensis (strain LMG 19424)).